The primary structure comprises 360 residues: Phospho-N-acetylmuramoyl-pentapeptide-transferase (360 aa).

10 consecutive transmembrane segments (helical) span residues 25–45, 73–93, 97–117, 135–155, 170–190, 199–219, 236–256, 263–283, 288–308, and 338–358; these read RGIL…PWMI, TMGG…WADL, YVWV…VDDY, FWQS…APSA, IPLG…SSNA, GLAI…CYLS, AGEL…FLWF, VFMG…MAVI, IVLF…VIQV, and VIVR…ATLK.

Belongs to the glycosyltransferase 4 family. MraY subfamily. The cofactor is Mg(2+).

It is found in the cell inner membrane. The enzyme catalyses UDP-N-acetyl-alpha-D-muramoyl-L-alanyl-gamma-D-glutamyl-meso-2,6-diaminopimeloyl-D-alanyl-D-alanine + di-trans,octa-cis-undecaprenyl phosphate = di-trans,octa-cis-undecaprenyl diphospho-N-acetyl-alpha-D-muramoyl-L-alanyl-D-glutamyl-meso-2,6-diaminopimeloyl-D-alanyl-D-alanine + UMP. Its pathway is cell wall biogenesis; peptidoglycan biosynthesis. Catalyzes the initial step of the lipid cycle reactions in the biosynthesis of the cell wall peptidoglycan: transfers peptidoglycan precursor phospho-MurNAc-pentapeptide from UDP-MurNAc-pentapeptide onto the lipid carrier undecaprenyl phosphate, yielding undecaprenyl-pyrophosphoryl-MurNAc-pentapeptide, known as lipid I. This chain is Phospho-N-acetylmuramoyl-pentapeptide-transferase, found in Pseudomonas savastanoi pv. phaseolicola (strain 1448A / Race 6) (Pseudomonas syringae pv. phaseolicola (strain 1448A / Race 6)).